We begin with the raw amino-acid sequence, 128 residues long: Large ribosomal subunit protein bL17 (128 aa).

Belongs to the bacterial ribosomal protein bL17 family. In terms of assembly, part of the 50S ribosomal subunit. Contacts protein L32.

The sequence is that of Large ribosomal subunit protein bL17 from Histophilus somni (strain 129Pt) (Haemophilus somnus).